The chain runs to 48 residues: Large ribosomal subunit protein eL40 (48 aa).

Belongs to the eukaryotic ribosomal protein eL40 family.

In Methanosphaerula palustris (strain ATCC BAA-1556 / DSM 19958 / E1-9c), this protein is Large ribosomal subunit protein eL40.